Reading from the N-terminus, the 579-residue chain is Viral transcription factor IE2 (579 aa).

A compositionally biased stretch (basic and acidic residues) spans 1-11 (MESSAKRKMDP). 2 disordered regions span residues 1-30 (MESS…TPVT) and 99-161 (DSSS…VIIK). The span at 99-133 (DSSSTGPTLTTHSCSVSSAPLNKPTPTSVAVTNTP) shows a compositional bias: polar residues. Glycyl lysine isopeptide (Lys-Gly) (interchain with G-Cter in SUMO) cross-links involve residues Lys175 and Lys180. Positions 199-202 (CIVI) match the SUMO-interacting motif 1/SIM1 motif. The tract at residues 200–208 (IVISDSEEE) is non-covalent SUMO1 binding region (SIM). 2 positions are modified to phosphoserine: Ser203 and Ser205. A disordered region spans residues 206–335 (EEEQGEEVET…SKRISELDNE (130 aa)). Low complexity-rich tracts occupy residues 216-236 (RGAT…TSPT), 259-270 (SSSSSSCSSASD), and 301-316 (AASS…SSGG). Positions 409–412 (IQII) match the SUMO-interacting motif 1/SIM2 motif. An SUMO-interacting motif 1/SIM3 motif is present at residues 500 to 503 (VDLL).

It belongs to the HHV-5 IE2 protein family. As to quaternary structure, interacts with host SUMO-modified form of TATA-binding protein (TBP)-associated factor 12/TAF12 in a SIM-dependent manner; this interaction increases the transactivation activity of IE2. Interacts with host CHAF1A. Interacts with several components of the host transcriptional machinery including TBP, TF2B and CREB1. Interacts with host DNA replication licensing factor MCM3. Interacts with host PLSCR1; this interaction inhibits IE2 transactivating activity. In terms of processing, phosphorylated by host CK2 at Ser-203 and Ser-205; leading to enhanced SUMOylation. Post-translationally, SUMOylated; SUMOylation is enhanced when IE2 is phosphorylated by host CK2. The sumoylation is necessary for efficient replication of the virus and thus for the function of this viral transcription factor.

The protein resides in the host nucleus. Its function is as follows. Stimulates viral early and late gene expression and thus play a crucial role in the regulation of productive infection. Selectively drives host RNA Pol II transcription initiation at a subset of viral early-late and late promoters without substantially affecting Pol II transcription of expressed host genes. Mechanistically, forms a repressive complex at the major immediate-early promoter region involving direct association with host nucleosomes and TBP. Concerning activation, stimulates transcription by binding nearby, but not within, core promoter regions. In addition, activates quiescent cells to reenter the cell cycle and up-regulates several E2F-responsive genes, which are responsible for pushing the cell into S phase. In S-phase, inhibits cellular DNA synthesis and blocks further cell cycle progression. This is Viral transcription factor IE2 (UL122) from Homo sapiens (Human).